Here is a 230-residue protein sequence, read N- to C-terminus: 2-C-methyl-D-erythritol 4-phosphate cytidylyltransferase (230 aa).

It belongs to the IspD/TarI cytidylyltransferase family. IspD subfamily.

It carries out the reaction 2-C-methyl-D-erythritol 4-phosphate + CTP + H(+) = 4-CDP-2-C-methyl-D-erythritol + diphosphate. It participates in isoprenoid biosynthesis; isopentenyl diphosphate biosynthesis via DXP pathway; isopentenyl diphosphate from 1-deoxy-D-xylulose 5-phosphate: step 2/6. Catalyzes the formation of 4-diphosphocytidyl-2-C-methyl-D-erythritol from CTP and 2-C-methyl-D-erythritol 4-phosphate (MEP). The chain is 2-C-methyl-D-erythritol 4-phosphate cytidylyltransferase from Laribacter hongkongensis (strain HLHK9).